A 79-amino-acid polypeptide reads, in one-letter code: U1-plectoxin-Pt1c (79 aa).

Positions 1-18 (HLILASALICALVVCTFA) are cleaved as a signal peptide. Residues 19-31 (EEQVNVPFLPDER) constitute a propeptide that is removed on maturation. Cystine bridges form between Cys35–Cys49, Cys42–Cys55, Cys48–Cys66, Cys52–Cys75, and Cys57–Cys64. Positions 78–79 (RR) are excised as a propeptide.

This sequence belongs to the neurotoxin 02 (plectoxin) family. 02 (plectoxin) subfamily. Expressed by the venom gland.

The protein resides in the secreted. In terms of biological role, potent toxin that may paralyze and/or kill insect pests such as H.virescens (lepidoptera), S.exigua (beet armyworm) and M.sexta (tobacco hornworm). This Plectreurys tristis (Spider) protein is U1-plectoxin-Pt1c.